Reading from the N-terminus, the 163-residue chain is Early nodulin-like protein 20 (163 aa).

The signal sequence occupies residues 1-25 (MMGKYLWALVYVTVMILIIVVEVES). In terms of domain architecture, Phytocyanin spans 26-126 (SLHRVGGGRY…GMKLAITVLP (101 aa)). Residues N42, N63, N73, N88, and N135 are each glycosylated (N-linked (GlcNAc...) asparagine). A disulfide bridge connects residues C80 and C114. S138 carries GPI-anchor amidated serine lipidation. The propeptide at 139–163 (TTTPLIPPNAITAAILIFAFKALLL) is removed in mature form.

This sequence belongs to the early nodulin-like (ENODL) family.

It is found in the cell membrane. Its function is as follows. May act as a carbohydrate transporter. This chain is Early nodulin-like protein 20, found in Arabidopsis thaliana (Mouse-ear cress).